A 119-amino-acid polypeptide reads, in one-letter code: Putative F420H(2)-dependent quinone reductase Rv3178 (119 aa).

Coenzyme F420-(gamma-Glu)n contacts are provided by residues 21–23 (RKS), 27–32 (FVAPLL), 43–46 (VASA), and 54–58 (QWYRN).

Belongs to the F420H(2)-dependent quinone reductase family.

Its subcellular location is the cell membrane. The enzyme catalyses oxidized coenzyme F420-(gamma-L-Glu)(n) + a quinol + H(+) = reduced coenzyme F420-(gamma-L-Glu)(n) + a quinone. Functionally, involved in a F420-dependent anti-oxidant mechanism that protects M.tuberculosis against oxidative stress and bactericidal agents. Catalyzes the F420H(2)-dependent two-electron reduction of quinones to dihydroquinones, thereby preventing the formation of cytotoxic semiquinones obtained by the one-electron reduction pathway. Since menaquinone is the sole quinone electron carrier in the respiratory chain in M.tuberculosis, the physiological electron acceptor for Fqr-mediated F420H(2) oxidation is therefore likely to be the endogenous menaquinone found in the membrane fraction of M.tuberculosis. The protein is Putative F420H(2)-dependent quinone reductase Rv3178 of Mycobacterium tuberculosis (strain ATCC 25618 / H37Rv).